The primary structure comprises 497 residues: Alkene monooxygenase system, oxygenase component subunit alpha (497 aa).

E104, E134, H137, E197, E231, and H234 together coordinate Fe cation.

This sequence belongs to the TmoA/XamoA family. In terms of assembly, the alkene monooxygenase multicomponent enzyme system is composed of an electron transfer component and a monooxygenase component interacting with the effector protein XamoD. The electron transfer component is composed of a ferredoxin reductase (XamoF) and a ferredoxin (XamoC), and the monooxygenase component is formed by a heterohexamer (dimer of heterotrimers) of two alpha subunits (XamoA), two beta subunits (XamoE) and two gamma subunits (XamoB). It depends on Fe(2+) as a cofactor.

It is found in the cytoplasm. It carries out the reaction propene + NADH + O2 + H(+) = 1,2-epoxypropane + NAD(+) + H2O. With respect to regulation, inhibited by propyne. Its function is as follows. Component of the alkene monooxygenase multicomponent enzyme system which catalyzes the O2- and NADH-dependent epoxidation of short chain (C2 to C6) alkenes to their corresponding epoxides. Also able to catalyze the oxidation of a number of chlorinated alkenes, including trichloroethylene, cis- and trans-1,2-dichloroethylene, vinyl chloride, 1-chloropropylene, 1,3-dichloropropylene and 2,3-dichloropropylene. This is Alkene monooxygenase system, oxygenase component subunit alpha from Xanthobacter autotrophicus (strain ATCC BAA-1158 / Py2).